We begin with the raw amino-acid sequence, 459 residues long: Anthocyanidin 3-O-glucoside 2''-O-glucosyltransferase (459 aa).

Histidine 20 functions as the Proton acceptor in the catalytic mechanism. Histidine 20 is an an anthocyanidin binding site. Aspartate 117 serves as the catalytic Charge relay. The UDP-alpha-D-glucose site is built by threonine 138, valine 335, glutamine 337, histidine 352, tryptophan 355, serine 357, and glutamate 360. Position 375 (glycine 375) interacts with an anthocyanidin. UDP-alpha-D-glucose is bound by residues aspartate 376 and glutamine 377.

It belongs to the UDP-glycosyltransferase family.

It catalyses the reaction an anthocyanidin 3-O-beta-D-glucoside + UDP-alpha-D-glucose = an anthocyanidin 3-O-sophoroside + UDP + 2 H(+). It participates in pigment biosynthesis; anthocyanin biosynthesis. Glycosyltransferase that mediates the glucosylation of anthocyanidin 3-O-glucosides to yield anthocyanidin 3-O-sophorosides. 3-O-sophoroside derivatives are required for the color of flowers. This Ipomoea purpurea (Common morning glory) protein is Anthocyanidin 3-O-glucoside 2''-O-glucosyltransferase (3GGT).